The sequence spans 119 residues: Large ribosomal subunit protein bL20 (119 aa).

This sequence belongs to the bacterial ribosomal protein bL20 family.

Binds directly to 23S ribosomal RNA and is necessary for the in vitro assembly process of the 50S ribosomal subunit. It is not involved in the protein synthesizing functions of that subunit. The sequence is that of Large ribosomal subunit protein bL20 from Bordetella bronchiseptica (strain ATCC BAA-588 / NCTC 13252 / RB50) (Alcaligenes bronchisepticus).